The primary structure comprises 150 residues: Large ribosomal subunit protein bL9 (150 aa).

This sequence belongs to the bacterial ribosomal protein bL9 family.

Functionally, binds to the 23S rRNA. The sequence is that of Large ribosomal subunit protein bL9 from Paraburkholderia phytofirmans (strain DSM 17436 / LMG 22146 / PsJN) (Burkholderia phytofirmans).